Here is a 434-residue protein sequence, read N- to C-terminus: F-box/LRR-repeat protein 21 (434 aa).

The F-box domain occupies 39-85 (LLDWGNLPHHVVLRIFQYLPLIDRARASSVCRRWNEVFHIPDLWRKF). 6 LRR repeats span residues 187 to 213 (DTPV…KMSS), 214 to 239 (CPHV…ALNY), 242 to 265 (LSDK…RIDV), 322 to 347 (GRSV…VVCA), 349 to 374 (GIQV…GLSE), and 375 to 400 (CEVS…SIME).

As to quaternary structure, part of the SCF (SKP1-CUL1-F-box) E3 ubiquitin-protein ligase complex SCF(FBXL21) composed of CUL1, SKP1, RBX1 and FBXL21. Interacts with CRY1 and CRY2.

It localises to the cytoplasm. The protein localises to the cytosol. Its subcellular location is the nucleus. It functions in the pathway protein modification; protein ubiquitination. Its function is as follows. Substrate-recognition component of the SCF(FBXL21) E3 ubiquitin ligase complex involved in circadian rhythm function. Plays a key role in the maintenance of both the speed and the robustness of the circadian clock oscillation. The SCF(FBXL21) complex mainly acts in the cytosol and mediates ubiquitination of CRY proteins (CRY1 and CRY2), leading to CRY proteins stabilization. The SCF(FBXL21) complex counteracts the activity of the SCF(FBXL3) complex and protects CRY proteins from degradation. Involved in the hypothalamic suprachiasmatic nucleus (SCN) clock regulating temporal organization of the daily activities. The protein is F-box/LRR-repeat protein 21 (FBXL21) of Bos taurus (Bovine).